Consider the following 168-residue polypeptide: Probable deoxyuridine 5'-triphosphate nucleotidohydrolase (168 aa).

It belongs to the dCTP deaminase family. Archaeal dUTPase subfamily.

It carries out the reaction dUTP + H2O = dUMP + diphosphate + H(+). It participates in pyrimidine metabolism; dUMP biosynthesis; dUMP from dCTP (dUTP route): step 2/2. In terms of biological role, this enzyme is involved in nucleotide metabolism: it produces dUMP, the immediate precursor of thymidine nucleotides and it decreases the intracellular concentration of dUTP so that uracil cannot be incorporated into DNA. The protein is Probable deoxyuridine 5'-triphosphate nucleotidohydrolase of Archaeoglobus fulgidus (strain ATCC 49558 / DSM 4304 / JCM 9628 / NBRC 100126 / VC-16).